The sequence spans 415 residues: Procollagen C-endopeptidase enhancer 2 (415 aa).

Positions 1–23 are cleaved as a signal peptide; it reads MRGANAWAPLCLLLAAATQLSRQ. 7 cysteine pairs are disulfide-bonded: C33-C59, C86-C107, C154-C181, C208-C231, C297-C364, C301-C367, and C312-C415. 2 CUB domains span residues 33-144 and 154-268; these read CGGI…FSAA and CGGL…YIFR. Residues 297–415 form the NTR domain; the sequence is CQQKCRRTGT…LLDALKNKQC (119 aa). N-linked (GlcNAc...) asparagine glycosylation is present at N355.

In terms of assembly, interacts with heparin with high affinity, and type I or II collagen. Post-translationally, O-glycosylated; contains sialic acid. In terms of tissue distribution, highly expressed in the heart, trabecular meshwork, pituitary gland, bladder, mammary gland, trachea and placenta and weakly expressed in the brain. Expressed in cartilage.

The protein localises to the secreted. Its function is as follows. Binds to the C-terminal propeptide of types I and II procollagens and may enhance the cleavage of that propeptide by BMP1. The polypeptide is Procollagen C-endopeptidase enhancer 2 (PCOLCE2) (Homo sapiens (Human)).